Consider the following 494-residue polypeptide: Guanosine-5'-triphosphate,3'-diphosphate pyrophosphatase (494 aa).

The protein belongs to the GppA/Ppx family. GppA subfamily.

The catalysed reaction is guanosine 3'-diphosphate 5'-triphosphate + H2O = guanosine 3',5'-bis(diphosphate) + phosphate + H(+). The protein operates within purine metabolism; ppGpp biosynthesis; ppGpp from GTP: step 2/2. In terms of biological role, catalyzes the conversion of pppGpp to ppGpp. Guanosine pentaphosphate (pppGpp) is a cytoplasmic signaling molecule which together with ppGpp controls the 'stringent response', an adaptive process that allows bacteria to respond to amino acid starvation, resulting in the coordinated regulation of numerous cellular activities. The protein is Guanosine-5'-triphosphate,3'-diphosphate pyrophosphatase of Cronobacter sakazakii (strain ATCC BAA-894) (Enterobacter sakazakii).